We begin with the raw amino-acid sequence, 729 residues long: Phenylalanine ammonia-lyase (729 aa).

Catalysis depends on Tyr77, which acts as the Proton donor/acceptor. The 5-imidazolinone (Ala-Gly) cross-link spans 182 to 184 (ASG). Ser183 is subject to 2,3-didehydroalanine (Ser). Residues Asn241, Gln336, Arg342, Asn372, Lys443, Glu471, and Asn474 each contribute to the (E)-cinnamate site.

Belongs to the PAL/histidase family. Post-translationally, contains an active site 4-methylidene-imidazol-5-one (MIO), which is formed autocatalytically by cyclization and dehydration of residues Ala-Ser-Gly.

The protein resides in the cytoplasm. It carries out the reaction L-phenylalanine = (E)-cinnamate + NH4(+). It functions in the pathway secondary metabolite biosynthesis. The protein operates within phenylpropanoid metabolism; trans-cinnamate biosynthesis; trans-cinnamate from L-phenylalanine: step 1/1. Phenylalanine ammonia-lyase; part of the gene cluster that mediates the biosynthesis of squalestatin S1 (SQS1, also known as zaragozic acid A), a heavily oxidized fungal polyketide that offers potent cholesterol lowering activity by targeting squalene synthase (SS). SQS1 is composed of a 2,8-dioxobicyclic[3.2.1]octane-3,4,5-tricarboxyclic acid core that is connected to two lipophilic polyketide arms. These initial steps feature the priming of an unusual benzoic acid starter unit onto the highly reducing polyketide synthase pks2, followed by oxaloacetate extension and product release to generate a tricarboxylic acid containing product. The phenylalanine ammonia lyase (PAL) M7 and the acyl-CoA ligase M9 are involved in transforming phenylalanine into benzoyl-CoA. The citrate synthase-like protein R3 is involved in connecting the C-alpha-carbons of the hexaketide chain and oxaloacetate to afford the tricarboxylic acid unit. The potential hydrolytic enzymes, M8 and M10, are in close proximity to pks2 and may participate in product release. On the other side, the tetraketide arm is synthesized by a the squalestatin tetraketide synthase pks1 and enzymatically esterified to the core in the last biosynthetic step, by the acetyltransferase M4. The biosynthesis of the tetraketide must involve 3 rounds of chain extension. After the first and second rounds methyl-transfer occurs, and in all rounds of extension the ketoreductase and dehydratase are active. The enoyl reductase and C-MeT of pks1 are not active in the final round of extension. The acetyltransferase M4 appears to have a broad substrate selectivity for its acyl CoA substrate, allowing the in vitro synthesis of novel squalestatins. The biosynthesis of SQS1 requires several oxidative steps likely performed by oxidoreductases M1, R1 and R2. Finally, in support of the identification of the cluster as being responsible for SQS1 production, the cluster contains a gene encoding a putative squalene synthase (SS) R6, suggesting a likely mechanism for self-resistance. The sequence is that of Phenylalanine ammonia-lyase from Phoma sp. (strain ATCC 20986 / MF5453).